A 290-amino-acid polypeptide reads, in one-letter code: Small ribosomal subunit biogenesis GTPase RsgA (290 aa).

Residues 62–213 (KNSLVRPPIV…IADTPGFSSL (152 aa)) form the CP-type G domain. Residues 111–114 (SKLD) and 156–164 (GQTGVGKST) contribute to the GTP site. Residues Cys237, Cys242, His244, and Cys250 each coordinate Zn(2+).

This sequence belongs to the TRAFAC class YlqF/YawG GTPase family. RsgA subfamily. In terms of assembly, monomer. Associates with 30S ribosomal subunit, binds 16S rRNA. The cofactor is Zn(2+).

The protein resides in the cytoplasm. Functionally, one of several proteins that assist in the late maturation steps of the functional core of the 30S ribosomal subunit. Helps release RbfA from mature subunits. May play a role in the assembly of ribosomal proteins into the subunit. Circularly permuted GTPase that catalyzes slow GTP hydrolysis, GTPase activity is stimulated by the 30S ribosomal subunit. The sequence is that of Small ribosomal subunit biogenesis GTPase RsgA from Streptococcus agalactiae serotype III (strain NEM316).